The primary structure comprises 265 residues: Vegetative storage protein 2 (265 aa).

Residues 1-18 (MKILSLSLLLLLAATVSA) form the signal peptide. Asparagine 110, asparagine 188, and asparagine 210 each carry an N-linked (GlcNAc...) asparagine glycan.

Belongs to the APS1/VSP family. Highly expressed in flowers, but also found in leaves, vegetative shoots, petioles, peduncles, and receptacles of floral organs.

Functionally, may function as somatic storage protein during early seedling development. This Arabidopsis thaliana (Mouse-ear cress) protein is Vegetative storage protein 2 (VSP2).